Here is a 364-residue protein sequence, read N- to C-terminus: MAKYTVAVAGATGYAGGEALRILAAHPDFDITCVAGHSSVGESMAKHMPHIPQLANLVVEDTTPEVLNGHDVIILALPHGASGKLASQLDPNAVVVDLGADHRLEEQAAWDEFYGGDFYEHWTYGMPELITGKAADGSYTRQRAALPGTKRIAGPGCNVTATTLALQPGIAEGLVESQDIVADLVVGYSGAGKNLKRTNLLAAEALQSALPYSVGGKHRHIPEILQNFAHAAGKSAAEASEFTLGFTPILAPMSRGILATVSARMTDKAKTLSDEEIRAVWSKAYEGQDFMVLLPEGTLPATGNIIGSNAAHLQVVTDRKAGRIYAFAAIDNLNRGTAGQAVQSLNIALGLPEDAGLTKIGVAP.

The active site involves Cys-157.

This sequence belongs to the NAGSA dehydrogenase family. Type 1 subfamily.

The protein resides in the cytoplasm. The catalysed reaction is N-acetyl-L-glutamate 5-semialdehyde + phosphate + NADP(+) = N-acetyl-L-glutamyl 5-phosphate + NADPH + H(+). It participates in amino-acid biosynthesis; L-arginine biosynthesis; N(2)-acetyl-L-ornithine from L-glutamate: step 3/4. Catalyzes the NADPH-dependent reduction of N-acetyl-5-glutamyl phosphate to yield N-acetyl-L-glutamate 5-semialdehyde. In Bifidobacterium longum (strain DJO10A), this protein is N-acetyl-gamma-glutamyl-phosphate reductase.